Here is a 279-residue protein sequence, read N- to C-terminus: Large ribosomal subunit protein uL2 (279 aa).

The segment at 224–279 is disordered; sequence AMNPIDHPHGGGEGRTSGGRHPVTPWGKGTKGNRTRKSKASDKLIVRSRHAKKKGR. Basic residues predominate over residues 269–279; the sequence is VRSRHAKKKGR.

The protein belongs to the universal ribosomal protein uL2 family. As to quaternary structure, part of the 50S ribosomal subunit. Forms a bridge to the 30S subunit in the 70S ribosome.

In terms of biological role, one of the primary rRNA binding proteins. Required for association of the 30S and 50S subunits to form the 70S ribosome, for tRNA binding and peptide bond formation. It has been suggested to have peptidyltransferase activity; this is somewhat controversial. Makes several contacts with the 16S rRNA in the 70S ribosome. The polypeptide is Large ribosomal subunit protein uL2 (Cereibacter sphaeroides (strain ATCC 17029 / ATH 2.4.9) (Rhodobacter sphaeroides)).